The sequence spans 203 residues: MSGSLFIVAAPSGAGKTSLVKALAASMADIRLSISHTTRPPRPGEQDGMDYHFVTEAIFETMEGGGGFLEHAQVFGHRYGTAKESVLPLLAQGMDVILEIDWQGRRQVQAQFPHCVSIFILPPSRETLEHRLRLRGQDTEAVVARRMGDACAEISHYNEFDYLVVNDDFEVAHTDLRAIVQSRRLLRLRQEKRLKSLLGELLE.

Residues 3 to 181 (GSLFIVAAPS…AHTDLRAIVQ (179 aa)) form the Guanylate kinase-like domain. 10 to 17 (APSGAGKT) serves as a coordination point for ATP.

It belongs to the guanylate kinase family.

It localises to the cytoplasm. It carries out the reaction GMP + ATP = GDP + ADP. Essential for recycling GMP and indirectly, cGMP. The sequence is that of Guanylate kinase from Nitrosococcus oceani (strain ATCC 19707 / BCRC 17464 / JCM 30415 / NCIMB 11848 / C-107).